Reading from the N-terminus, the 156-residue chain is Small ribosomal subunit protein uS7 (156 aa).

Belongs to the universal ribosomal protein uS7 family. In terms of assembly, part of the 30S ribosomal subunit. Contacts proteins S9 and S11.

In terms of biological role, one of the primary rRNA binding proteins, it binds directly to 16S rRNA where it nucleates assembly of the head domain of the 30S subunit. Is located at the subunit interface close to the decoding center, probably blocks exit of the E-site tRNA. This chain is Small ribosomal subunit protein uS7, found in Oleidesulfovibrio alaskensis (strain ATCC BAA-1058 / DSM 17464 / G20) (Desulfovibrio alaskensis).